We begin with the raw amino-acid sequence, 664 residues long: Alpha-1,4-glucan:maltose-1-phosphate maltosyltransferase (664 aa).

Alpha-maltose 1-phosphate-binding residues include Lys-261, Gln-321, and Asp-356. Residue Asp-393 is the Nucleophile of the active site. Residue Asn-394 coordinates alpha-maltose 1-phosphate. Glu-422 serves as the catalytic Proton donor. 533-534 is an alpha-maltose 1-phosphate binding site; it reads KY.

It belongs to the glycosyl hydrolase 13 family. GlgE subfamily. As to quaternary structure, homodimer.

It catalyses the reaction alpha-maltose 1-phosphate + [(1-&gt;4)-alpha-D-glucosyl](n) = [(1-&gt;4)-alpha-D-glucosyl](n+2) + phosphate. Functionally, maltosyltransferase that uses maltose 1-phosphate (M1P) as the sugar donor to elongate linear or branched alpha-(1-&gt;4)-glucans. Is involved in a branched alpha-glucan biosynthetic pathway from trehalose, together with TreS, Mak and GlgB. The polypeptide is Alpha-1,4-glucan:maltose-1-phosphate maltosyltransferase (Pseudomonas aeruginosa (strain ATCC 15692 / DSM 22644 / CIP 104116 / JCM 14847 / LMG 12228 / 1C / PRS 101 / PAO1)).